A 550-amino-acid chain; its full sequence is CTP synthase (550 aa).

The tract at residues M1–L277 is amidoligase domain. S23 serves as a coordination point for CTP. S23 contributes to the UTP binding site. Position 24–29 (S24–I29) interacts with ATP. Y64 contributes to the L-glutamine binding site. Residue D81 participates in ATP binding. Mg(2+) is bound by residues D81 and E151. CTP-binding positions include D158 to E160, K198 to Q203, and K234. UTP is bound by residues K198 to Q203 and K234. V252 is a binding site for ATP. A Glutamine amidotransferase type-1 domain is found at K302 to R549. Residue G364 participates in L-glutamine binding. C391 serves as the catalytic Nucleophile; for glutamine hydrolysis. L-glutamine-binding positions include L392–Q395, E415, and R472. Catalysis depends on residues H522 and E524.

It belongs to the CTP synthase family. Homotetramer in the presence of UTP and ATP. Is in a protein concentration-dependent equilibrium between monomer, dimer, and tetramer in the absence of UTP and ATP.

The enzyme catalyses UTP + L-glutamine + ATP + H2O = CTP + L-glutamate + ADP + phosphate + 2 H(+). The catalysed reaction is L-glutamine + H2O = L-glutamate + NH4(+). It catalyses the reaction UTP + NH4(+) + ATP = CTP + ADP + phosphate + 2 H(+). Its pathway is pyrimidine metabolism; CTP biosynthesis via de novo pathway; CTP from UDP: step 2/2. Its activity is regulated as follows. Allosterically activated by GTP, when glutamine is the substrate. GTP has no effect on the reaction when ammonia is the substrate. The allosteric effector GTP functions by stabilizing the protein conformation that binds the tetrahedral intermediate(s) formed during glutamine hydrolysis. Inhibited by the product CTP, via allosteric rather than competitive inhibition. Functionally, catalyzes the ATP-dependent amination of UTP to CTP with either L-glutamine or ammonia as the source of nitrogen. Regulates intracellular CTP levels through interactions with the four ribonucleotide triphosphates. This Thermus thermophilus (strain ATCC 27634 / DSM 579 / HB8) protein is CTP synthase.